The chain runs to 211 residues: PITH domain-containing protein CG6153 (211 aa).

A PITH domain is found at 20–192 (DHALEMGIEY…GVTICNYESR (173 aa)).

It belongs to the PITHD1 family.

The sequence is that of PITH domain-containing protein CG6153 from Drosophila melanogaster (Fruit fly).